Consider the following 441-residue polypeptide: MFVKSETKTRGGLTAWFALTSVYKSEQFKSMAIAYTSPTAAILCEDAFQSMYAQMVCGLCQRHDVVRFGAVFAAALVRAIRFLQLNWGQLAADIEAGELGPHVADPSVREAVSGILRSDAELAEFVRIECSKGDWAGIITRIWPNTKYVDAIVTGAMAQYIRTLQYYSGGLPIVSTSYASSECFFGINLRPVCDPSEVSYTIMPNTAYFEFLPVGEVVDATNLVDLARVEVGREYEVVITTYAGLSRYRVGDVLRVTGFHNAAPQFRFVRRQSVLLSVELDKTDEAELHRAVERASSALLRPRGVSVAEYTSRACTERIPGHYVVYWELLTESPVGAGDGDTVDGETLGRCCLEMEEALSAVYRQGRVADGSIGPLEIRIVRPGTFEEVMDLAVSRGTSIGQYKVPQCVTVPSVVELLDSRVVSSQFSPALPHWIPTPRSD.

Belongs to the IAA-amido conjugating enzyme family. In terms of tissue distribution, expressed in etiolated seedlings and roots.

In terms of biological role, may catalyze the synthesis of indole-3-acetic acid (IAA)-amino acid conjugates, providing a mechanism for the plant to cope with the presence of excess auxin. The protein is Probable indole-3-acetic acid-amido synthetase GH3.9 (GH3.9) of Oryza sativa subsp. japonica (Rice).